The chain runs to 159 residues: Ribosomal RNA large subunit methyltransferase H (159 aa).

S-adenosyl-L-methionine contacts are provided by residues leucine 76, glycine 108, and 127–132; that span reads FSKMTL.

It belongs to the RNA methyltransferase RlmH family. As to quaternary structure, homodimer.

Its subcellular location is the cytoplasm. The enzyme catalyses pseudouridine(1915) in 23S rRNA + S-adenosyl-L-methionine = N(3)-methylpseudouridine(1915) in 23S rRNA + S-adenosyl-L-homocysteine + H(+). In terms of biological role, specifically methylates the pseudouridine at position 1915 (m3Psi1915) in 23S rRNA. This chain is Ribosomal RNA large subunit methyltransferase H, found in Bacillus cereus (strain ATCC 14579 / DSM 31 / CCUG 7414 / JCM 2152 / NBRC 15305 / NCIMB 9373 / NCTC 2599 / NRRL B-3711).